Consider the following 754-residue polypeptide: Nibrin (754 aa).

Residues 24-83 (YVVGRKNCAILIENDQSISRNHAVLTANFSVTNLSQTDEIPVLTLKDNSKYGTFVNEEKM) form the FHA domain. 2 consecutive BRCT domains span residues 105 to 181 (KFRI…TEFL) and 224 to 315 (GKTF…LAVI). The interval 111–328 (EPLVACSSCL…TKNYCDPQGH (218 aa)) is mediates interaction with SP100. The tract at residues 221 to 402 (IFKGKTFIFL…FRMLSQDAPT (182 aa)) is interaction with MTOR, MAPKAP1 and RICTOR. Phosphoserine; by ATM is present on Ser-278. Residues 326-346 (QGHPSTGLKTTTPGPSLSQGV) form a disordered region. Residues 328 to 346 (HPSTGLKTTTPGPSLSQGV) show a composition bias toward polar residues. The residue at position 337 (Thr-337) is a Phosphothreonine. Residue Ser-343 is modified to Phosphoserine; by ATM. Residue Ser-347 is modified to Phosphoserine. Lys-388 is modified (N6-lactoyllysine). Disordered stretches follow at residues 396–415 (LSQDAPTVKESCKTSSNNNS) and 430–478 (QLSP…MSSC). At Ser-397 the chain carries Phosphoserine. A Phosphothreonine modification is found at Thr-402. Composition is skewed to polar residues over residues 430–440 (QLSPTKLPSIN) and 447–462 (SQQQQTNSIRNYFQPS). Ser-432 carries the phosphoserine; by CDK2 modification. Lys-435 is covalently cross-linked (Glycyl lysine isopeptide (Lys-Gly) (interchain with G-Cter in ubiquitin)). The Nuclear localization signal motif lies at 461 to 467 (PSTKKRE). Phosphoserine is present on residues Ser-509 and Ser-518. Residues Lys-529, Lys-571, and Lys-582 each participate in a glycyl lysine isopeptide (Lys-Gly) (interchain with G-Cter in SUMO2) cross-link. Residues Ser-615 and Ser-673 each carry the phosphoserine modification. Residues Lys-686, Lys-690, and Lys-735 each participate in a glycyl lysine isopeptide (Lys-Gly) (interchain with G-Cter in ubiquitin) cross-link. Residues 740–749 (ADDLFRYNPY) carry the FxF/Y motif motif.

The protein belongs to the Nibrin family. Component of the MRN complex composed of two heterodimers RAD50 and MRE11 associated with a single NBN. The MRN complexes dimerize on DNA to form joined MRN-MRN oligomers required for DNA double-strand break repair. As part of the MRN complex, interacts with MCM9; the interaction recruits the complex to DNA repair sites. Component of the BASC complex, at least composed of BRCA1, MSH2, MSH6, MLH1, ATM, BLM, RAD50, MRE11 and NBN. Interacts with histone H2AX; this requires phosphorylation of H2AX on 'Ser-139' and promotes NBN recruitment to DNA damage sites. Interacts with (phosphorylated) MDC1; promoting NBN recruitment to DNA damage sites. Interacts with (phosphorylated) RAD17; promoting NBN recruitment to DNA damage sites. Interacts (via FxF/Y motif) with ATM. Interacts with HJURP. Interacts with INTS3. Interacts with KPNA2. Interacts with TERF2; interaction is disrupted upon NBN phosphorylation by CDK2. Interacts with (phosphorylated) RBBP8/CtIP; the interaction links the role of the MRN complex in DNA double-strand break sensing to resection. Interacts with SP100; recruits NBN to PML bodies. Interacts with ATF2. Interacts with MTOR, MAPKAP1 isoform 2 and RICTOR; indicative for an association with the mTORC2 complex. Interacts with MRNIP. Interacts with UFL1; promoting UFL1 recruitment to double-strand breaks following DNA damage. Interacts with CYREN (via XLF motif). As to quaternary structure, (Microbial infection) Interacts with herpes simplex virus 1 protein UL12. In terms of processing, phosphorylated by ATM in response of ionizing radiation, and such phosphorylation is responsible intra-S phase checkpoint control and telomere maintenance. Phosphorylated at Ser-432 by CDK2 in S/G2 phases abolishes interaction with TERF2, enabling DCLRE1B/Apollo recruitment to telomeres. Phosphorylation at Ser-432 in response to dysfunctional telomeres promotes non-homologous end joining repair at telomeres, while dephosphorylation by PPP1CA promotes microhomology-mediated end-joining (MMEJ) repair. Post-translationally, ubiquitinated at Lys-435 via 'Lys-6'-linked ubiquitin chains by RNF8, promoting NBN recruitment to DNA double-strand breaks (DSBs). Ubiquitinated at Lys-686 and Lys-689 via 'Lys-63'-linked ubiquitin chains by PELI1: ubiquitination takes place following PELI1 phosphorylation and promotes ATM activation and DNA repair. Ubiquitinated at Lys-735 via 'Lys-63'-linked ubiquitin chains by the SCF(SKP2) complex: ubiquitination takes place following SKP2 phosphorylation and promotes ATM activation and DNA repair. Lactylation at Lys-388 by KAT5 in response to DNA damage promotes recruitment of the MRN complex to DNA damage sites. Delactylated by HDAC3. As to expression, ubiquitous. Expressed at high levels in testis.

Its subcellular location is the nucleus. The protein resides in the chromosome. The protein localises to the PML body. It localises to the telomere. Functionally, component of the MRN complex, which plays a central role in double-strand break (DSB) repair, DNA recombination, maintenance of telomere integrity and meiosis. The MRN complex is involved in the repair of DNA double-strand breaks (DSBs) via homologous recombination (HR), an error-free mechanism which primarily occurs during S and G2 phases. The complex (1) mediates the end resection of damaged DNA, which generates proper single-stranded DNA, a key initial steps in HR, and is (2) required for the recruitment of other repair factors and efficient activation of ATM and ATR upon DNA damage. The MRN complex possesses single-strand endonuclease activity and double-strand-specific 3'-5' exonuclease activity, which are provided by MRE11, to initiate end resection, which is required for single-strand invasion and recombination. Within the MRN complex, NBN acts as a protein-protein adapter, which specifically recognizes and binds phosphorylated proteins, promoting their recruitment to DNA damage sites. Recruits MRE11 and RAD50 components of the MRN complex to DSBs in response to DNA damage. Promotes the recruitment of PI3/PI4-kinase family members ATM, ATR, and probably DNA-PKcs to the DNA damage sites, activating their functions. Mediates the recruitment of phosphorylated RBBP8/CtIP to DSBs, leading to cooperation between the MRN complex and RBBP8/CtIP to initiate end resection. RBBP8/CtIP specifically promotes the endonuclease activity of the MRN complex to clear DNA ends containing protein adducts. The MRN complex is also required for the processing of R-loops. NBN also functions in telomere length maintenance via its interaction with TERF2: interaction with TERF2 during G1 phase preventing recruitment of DCLRE1B/Apollo to telomeres. NBN also promotes DNA repair choice at dysfunctional telomeres: NBN phosphorylation by CDK2 promotes non-homologous end joining repair at telomeres, while unphosphorylated NBN promotes microhomology-mediated end-joining (MMEJ) repair. Enhances AKT1 phosphorylation possibly by association with the mTORC2 complex. In Homo sapiens (Human), this protein is Nibrin.